A 280-amino-acid polypeptide reads, in one-letter code: MAKIIDGKAIAAKIRGEITAEVAKLASKGVTPGLAVVLVGEDPASKVYVSMKEKACKDVGIFSDEYKLPVDTSEADLLLLIHKLNSDPKIHGILIQLPLPKQIDTEKVLEAISPEKDADGFHPYNVGRLVIGKPLFQPCTPYGVMVMLKEAGVELAGKEVVVVGRSNIVGKPVAFMCLQQNATVTLCHSKTRDLAAKVGMADVVIAAVGQPEMIKGAWIKEGAVVIDVGVNRVGEKKLVGDVEFDAAAERASAITPVPGGVGPMTITMLLYNTLEAAKRR.

NADP(+)-binding positions include 164-166 (GRS), Ser-189, and Val-230.

Belongs to the tetrahydrofolate dehydrogenase/cyclohydrolase family. As to quaternary structure, homodimer.

The catalysed reaction is (6R)-5,10-methylene-5,6,7,8-tetrahydrofolate + NADP(+) = (6R)-5,10-methenyltetrahydrofolate + NADPH. It catalyses the reaction (6R)-5,10-methenyltetrahydrofolate + H2O = (6R)-10-formyltetrahydrofolate + H(+). It participates in one-carbon metabolism; tetrahydrofolate interconversion. In terms of biological role, catalyzes the oxidation of 5,10-methylenetetrahydrofolate to 5,10-methenyltetrahydrofolate and then the hydrolysis of 5,10-methenyltetrahydrofolate to 10-formyltetrahydrofolate. The polypeptide is Bifunctional protein FolD (Geotalea uraniireducens (strain Rf4) (Geobacter uraniireducens)).